A 211-amino-acid chain; its full sequence is FMN-dependent NADH:quinone oxidoreductase (211 aa).

Residues Ser-10 and 16 to 18 (SVS) each bind FMN.

Belongs to the azoreductase type 1 family. Homodimer. FMN serves as cofactor.

The catalysed reaction is 2 a quinone + NADH + H(+) = 2 a 1,4-benzosemiquinone + NAD(+). It carries out the reaction N,N-dimethyl-1,4-phenylenediamine + anthranilate + 2 NAD(+) = 2-(4-dimethylaminophenyl)diazenylbenzoate + 2 NADH + 2 H(+). Functionally, quinone reductase that provides resistance to thiol-specific stress caused by electrophilic quinones. In terms of biological role, also exhibits azoreductase activity. Catalyzes the reductive cleavage of the azo bond in aromatic azo compounds to the corresponding amines. In Parafrankia sp. (strain EAN1pec), this protein is FMN-dependent NADH:quinone oxidoreductase.